The following is a 335-amino-acid chain: MKRIAIDAMGGDNAPKAIVEGVNQAIEAFSDIEIQLYGDQTKINSYLIQSDRVAIIHTDEKIMSDDEPAKAVRRKKKASMVLAAKAVKEGKADAIISAGNTGVLLAVGLFVVGRIKGVDRPGLLSTIPTVTGLGFDMLDLGANAENTAKHLHQYAILGSFYAKNVRGIANPRVGLLNNGTEETKGDPLRKATYELLTADNTISFVGNVEARELMSGVADVIVSDGFTGNAVLKSIEGTAISIMGQLKQIINSGGIKTKIGASLLKSSLYEMKKTLDYSSAGGAVLFGLKAPVVKSHGSSDVKAIFSTIKQVRTMLDTNVVGQLVEEFAKETQVND.

It belongs to the PlsX family. Homodimer. Probably interacts with PlsY.

The protein resides in the cytoplasm. It catalyses the reaction a fatty acyl-[ACP] + phosphate = an acyl phosphate + holo-[ACP]. It participates in lipid metabolism; phospholipid metabolism. Catalyzes the reversible formation of acyl-phosphate (acyl-PO(4)) from acyl-[acyl-carrier-protein] (acyl-ACP). This enzyme utilizes acyl-ACP as fatty acyl donor, but not acyl-CoA. This is Phosphate acyltransferase from Streptococcus pyogenes serotype M18 (strain MGAS8232).